A 156-amino-acid polypeptide reads, in one-letter code: Small ribosomal subunit protein uS7 (156 aa).

It belongs to the universal ribosomal protein uS7 family. In terms of assembly, part of the 30S ribosomal subunit. Contacts proteins S9 and S11.

Its function is as follows. One of the primary rRNA binding proteins, it binds directly to 16S rRNA where it nucleates assembly of the head domain of the 30S subunit. Is located at the subunit interface close to the decoding center, probably blocks exit of the E-site tRNA. In Rhizobium etli (strain ATCC 51251 / DSM 11541 / JCM 21823 / NBRC 15573 / CFN 42), this protein is Small ribosomal subunit protein uS7.